A 142-amino-acid chain; its full sequence is FAD synthase (142 aa).

ATP is bound by residues 9 to 10, 14 to 17, aspartate 93, and tyrosine 120; these read VF and HLGH.

It belongs to the archaeal FAD synthase family. As to quaternary structure, homodimer. A divalent metal cation is required as a cofactor.

It catalyses the reaction FMN + ATP + H(+) = FAD + diphosphate. The protein operates within cofactor biosynthesis; FAD biosynthesis; FAD from FMN: step 1/1. Its function is as follows. Catalyzes the transfer of the AMP portion of ATP to flavin mononucleotide (FMN) to produce flavin adenine dinucleotide (FAD) coenzyme. This chain is FAD synthase, found in Thermoplasma acidophilum (strain ATCC 25905 / DSM 1728 / JCM 9062 / NBRC 15155 / AMRC-C165).